The following is a 462-amino-acid chain: Glycoprotein endo-alpha-1,2-mannosidase (462 aa).

Over 1–8 (MAKFRRGT) the chain is Cytoplasmic. A helical; Signal-anchor for type II membrane protein membrane pass occupies residues 9–29 (CIILALFILFIFSLMMGLKML). At 30-462 (RPNTATFGAP…YALDHQLPVS (433 aa)) the chain is on the lumenal side. The segment at 60–462 (DFQKSDRINS…YALDHQLPVS (403 aa)) is catalytic.

The protein belongs to the glycosyl hydrolase 99 family. Undergoes proteolytic cleavage in the C-terminal region.

Its subcellular location is the golgi apparatus membrane. It catalyses the reaction N-{alpha-Glc-(1-&gt;3)-alpha-Man-(1-&gt;2)-alpha-Man-(1-&gt;2)-alpha-Man-(1-&gt;3)-[alpha-Man-(1-&gt;2)-alpha-Man-(1-&gt;3)-[alpha-Man-(1-&gt;2)-alpha-Man-(1-&gt;6)]-alpha-Man-(1-&gt;6)]-beta-Man-(1-&gt;4)-beta-GlcNAc-(1-&gt;4)-beta-GlcNAc}-L-asparaginyl-[protein] + H2O = alpha-D-glucosyl-(1-&gt;3)-D-mannopyranose + N(4)-{alpha-D-Man-(1-&gt;2)-alpha-D-Man-(1-&gt;3)-[alpha-D-Man-(1-&gt;2)-alpha-D-Man-(1-&gt;3)-[alpha-D-Man-(1-&gt;2)-alpha-D-Man-(1-&gt;6)]-alpha-D-Man-(1-&gt;6)]-beta-D-Man-(1-&gt;4)-beta-D-GlaNAc-(1-&gt;4)-beta-D-GlcNAc}-L-asparaginyl-[protein] (N-glucan mannose isomer 8A1,2,3B1,2). In Pongo abelii (Sumatran orangutan), this protein is Glycoprotein endo-alpha-1,2-mannosidase (MANEA).